The following is a 493-amino-acid chain: Probable GTP-binding protein OBGM, mitochondrial (493 aa).

Residues Met1–Pro28 constitute a mitochondrion transit peptide. The Obg domain occupies Thr48–Ile303. 2 disordered regions span residues Ser65–Gly89 and Gly146–Asp215. Over residues Ser187–Gln196 the composition is skewed to acidic residues. In terms of domain architecture, OBG-type G spans Ala304–Asp476. GTP-binding positions include Gly310–Ser317 and Asp356–Leu360.

It belongs to the TRAFAC class OBG-HflX-like GTPase superfamily. OBG GTPase family.

It is found in the mitochondrion. Its function is as follows. May bind GTP and have GTPase activity. This chain is Probable GTP-binding protein OBGM, mitochondrial (ATOBGM), found in Arabidopsis thaliana (Mouse-ear cress).